The sequence spans 70 residues: Large ribosomal subunit protein bL31 (70 aa).

The protein belongs to the bacterial ribosomal protein bL31 family. Type A subfamily. Part of the 50S ribosomal subunit.

Its function is as follows. Binds the 23S rRNA. The protein is Large ribosomal subunit protein bL31 of Chlorobium chlorochromatii (strain CaD3).